The primary structure comprises 293 residues: Cell wall protein PGA31 (293 aa).

The first 18 residues, 1-18 (MKFLTAASLLTLSSSALA), serve as a signal peptide directing secretion. An N-linked (GlcNAc...) asparagine glycan is attached at Asn-131. The disordered stretch occupies residues 161 to 187 (ESASSSSSSAAPEPTASSSEAPKETPV). Low complexity predominate over residues 163–180 (ASSSSSSAAPEPTASSSE). A glycan (N-linked (GlcNAc...) asparagine) is linked at Asn-190. The segment at 233–262 (VPSKTASSEAAPPKTTVDSVSKPAPSGKKP) is disordered. Gly-271 is lipidated: GPI-anchor amidated glycine. Positions 272 to 293 (AANALTGGSVAIAVAAAIGLVF) are cleaved as a propeptide — removed in mature form.

Belongs to the SRP1/TIP1 family. The GPI-anchor is attached to the protein in the endoplasmic reticulum and serves to target the protein to the cell surface. There, the glucosamine-inositol phospholipid moiety is cleaved off and the GPI-modified mannoprotein is covalently attached via its lipidless GPI glycan remnant to the 1,6-beta-glucan of the outer cell wall layer.

Its subcellular location is the secreted. The protein resides in the cell wall. It localises to the membrane. Functionally, component of the cell wall involved in virulence which plays a role in the relationship between C.albicans and the host. Involved in the regulation or assembly of chitin within the cell wall. In Candida albicans (strain SC5314 / ATCC MYA-2876) (Yeast), this protein is Cell wall protein PGA31 (PGA31).